The chain runs to 330 residues: Putative UV-damage endonuclease (330 aa).

The protein belongs to the uve1/UvsE family.

It localises to the virion. Functionally, endonuclease for the repair of UV-irradiated DNA. The chain is Putative UV-damage endonuclease from Acanthamoeba polyphaga mimivirus (APMV).